Here is a 53-residue protein sequence, read N- to C-terminus: UPF0391 membrane protein YPTS_0599 (53 aa).

Transmembrane regions (helical) follow at residues 4-24 (WGIIFLIIALIAAALGFGGLA) and 27-47 (AAWAAKVVFVVGIILFLISLF).

It belongs to the UPF0391 family.

It is found in the cell membrane. This is UPF0391 membrane protein YPTS_0599 from Yersinia pseudotuberculosis serotype IB (strain PB1/+).